We begin with the raw amino-acid sequence, 545 residues long: Membrane protein insertase YidC (545 aa).

A run of 4 helical transmembrane segments spans residues 350–370 (IIGNWGWAIIVLTIIVKAVLY), 424–444 (LPMLLQIPVFIGLYWALFASV), 461–481 (ADPYYILPIIMAATMFAQTYL), and 498–518 (PLVFSVMFFFFPAGLVLYWVI).

The protein belongs to the OXA1/ALB3/YidC family. Type 1 subfamily. Interacts with the Sec translocase complex via SecD. Specifically interacts with transmembrane segments of nascent integral membrane proteins during membrane integration.

Its subcellular location is the cell inner membrane. Its function is as follows. Required for the insertion and/or proper folding and/or complex formation of integral membrane proteins into the membrane. Involved in integration of membrane proteins that insert both dependently and independently of the Sec translocase complex, as well as at least some lipoproteins. Aids folding of multispanning membrane proteins. In Neisseria meningitidis serogroup A / serotype 4A (strain DSM 15465 / Z2491), this protein is Membrane protein insertase YidC.